The sequence spans 330 residues: Syntaxin-121 (330 aa).

Positions 1–10 are enriched in polar residues; it reads MNNLFSSSWK. The interval 1–39 is disordered; it reads MNNLFSSSWKRTGGGGGGDGDIESGGGVEMAPPPGAAAG. Residues 1–284 lie on the Cytoplasmic side of the membrane; the sequence is MNNLFSSSWK…RKHQKSTRKW (284 aa). Over residues 12–28 the composition is skewed to gly residues; sequence TGGGGGGDGDIESGGGV. One can recognise a t-SNARE coiled-coil homology domain in the interval 212-274; it reads VAEIQERHGA…DRGREQLVVA (63 aa). The chain crosses the membrane as a helical; Anchor for type IV membrane protein span at residues 285–305; sequence TCIAIIILLVLILVVVLPIVL. Over 306-330 the chain is Vesicular; sequence KFVNNNKSSSSSPAPATPSPPPPTA. The tract at residues 311 to 330 is disordered; sequence NKSSSSSPAPATPSPPPPTA. Over residues 320–330 the composition is skewed to pro residues; the sequence is PATPSPPPPTA.

The protein belongs to the syntaxin family. In terms of assembly, interacts with SNAP32. Expressed in roots, stems, leaf blades and leaf sheaths.

It is found in the cell membrane. Its function is as follows. Vesicle trafficking protein that functions in the secretory pathway. Involved in plant defense by mediating host resistance to the rice blast fungus Magnaporthe oryzae. The interaction with SNAP32 may contribute to host resistance to the rice blast fungus. In Oryza sativa subsp. japonica (Rice), this protein is Syntaxin-121.